Here is an 87-residue protein sequence, read N- to C-terminus: uncharacterized protein (87 aa).

The protein belongs to the YlmC/YmxH family.

This is an uncharacterized protein from Clostridium acetobutylicum (strain ATCC 824 / DSM 792 / JCM 1419 / IAM 19013 / LMG 5710 / NBRC 13948 / NRRL B-527 / VKM B-1787 / 2291 / W).